We begin with the raw amino-acid sequence, 69 residues long: Large ribosomal subunit protein bL31 (69 aa).

This sequence belongs to the bacterial ribosomal protein bL31 family. Type A subfamily. Part of the 50S ribosomal subunit.

In terms of biological role, binds the 23S rRNA. The chain is Large ribosomal subunit protein bL31 from Mycoplasmopsis pulmonis (strain UAB CTIP) (Mycoplasma pulmonis).